The sequence spans 88 residues: Small ribosomal subunit protein uS15 (88 aa).

Belongs to the universal ribosomal protein uS15 family. In terms of assembly, part of the 30S ribosomal subunit. Forms a bridge to the 50S subunit in the 70S ribosome, contacting the 23S rRNA.

Its function is as follows. One of the primary rRNA binding proteins, it binds directly to 16S rRNA where it helps nucleate assembly of the platform of the 30S subunit by binding and bridging several RNA helices of the 16S rRNA. Forms an intersubunit bridge (bridge B4) with the 23S rRNA of the 50S subunit in the ribosome. This chain is Small ribosomal subunit protein uS15, found in Borrelia garinii subsp. bavariensis (strain ATCC BAA-2496 / DSM 23469 / PBi) (Borreliella bavariensis).